A 124-amino-acid polypeptide reads, in one-letter code: Small ribosomal subunit protein uS12 (124 aa).

3-methylthioaspartic acid is present on Asp89.

This sequence belongs to the universal ribosomal protein uS12 family. Part of the 30S ribosomal subunit. Contacts proteins S8 and S17. May interact with IF1 in the 30S initiation complex.

Its function is as follows. With S4 and S5 plays an important role in translational accuracy. Functionally, interacts with and stabilizes bases of the 16S rRNA that are involved in tRNA selection in the A site and with the mRNA backbone. Located at the interface of the 30S and 50S subunits, it traverses the body of the 30S subunit contacting proteins on the other side and probably holding the rRNA structure together. The combined cluster of proteins S8, S12 and S17 appears to hold together the shoulder and platform of the 30S subunit. The polypeptide is Small ribosomal subunit protein uS12 (Shewanella halifaxensis (strain HAW-EB4)).